A 124-amino-acid polypeptide reads, in one-letter code: Ribonuclease pancreatic (124 aa).

Residues Lys7 and Arg10 each contribute to the substrate site. His12 (proton acceptor) is an active-site residue. Cystine bridges form between Cys26–Cys84, Cys40–Cys95, Cys58–Cys110, and Cys65–Cys72. Residue Asn34 is glycosylated (N-linked (GlcNAc...) asparagine). Substrate contacts are provided by residues 41-45, Lys66, and Arg85; that span reads KPVNT. His119 serves as the catalytic Proton donor.

The protein belongs to the pancreatic ribonuclease family. As to quaternary structure, monomer. Interacts with and forms tight 1:1 complexes with RNH1. Dimerization of two such complexes may occur. Interaction with RNH1 inhibits this protein. Pancreas.

The protein localises to the secreted. It catalyses the reaction an [RNA] containing cytidine + H2O = an [RNA]-3'-cytidine-3'-phosphate + a 5'-hydroxy-ribonucleotide-3'-[RNA].. It carries out the reaction an [RNA] containing uridine + H2O = an [RNA]-3'-uridine-3'-phosphate + a 5'-hydroxy-ribonucleotide-3'-[RNA].. Endonuclease that catalyzes the cleavage of RNA on the 3' side of pyrimidine nucleotides. Acts on single-stranded and double-stranded RNA. This chain is Ribonuclease pancreatic (RNASE1), found in Mesocricetus auratus (Golden hamster).